A 150-amino-acid chain; its full sequence is Classical arabinogalactan protein 6 (150 aa).

The signal sequence occupies residues M1–A20. Low complexity-rich tracts occupy residues F19 to A75 and S85 to V98. Residues F19 to T131 form a disordered region. The GPI-anchor amidated serine moiety is linked to residue S126. Positions G127 to F150 are cleaved as a propeptide — removed in mature form.

This sequence belongs to the classical AGP family. Post-translationally, O-glycosylated on the hydroxyproline residues. In terms of tissue distribution, expressed in the anthers.

It localises to the cell membrane. Its function is as follows. Proteoglycan that seems to be implicated in diverse developmental roles such as differentiation, cell-cell recognition, embryogenesis and programmed cell death. Plays an important role during the formation of the nexine layer of the pollen wall. The polypeptide is Classical arabinogalactan protein 6 (AGP6) (Arabidopsis thaliana (Mouse-ear cress)).